The following is a 575-amino-acid chain: MNTKGKVVGVNGNLVTIEVEGSVSMNEVLFVKTGGRNLKAEVIRVRGNEVDAQVFELTKGISVGDLVEFTDKLLTVELGPGLLTQVYDGLQNPLPELAIKCGFFLERGVYLRPLNKDKKWNFKKTSKVGDSVIAGDFLGFVIEGTVHHQIMIPFYKRDSYKIVEIVNDGDYSIDEQIAVIEDDSGMRHSITMSFHWPVKIPITNYKQRLIPSEPMLTQTRIIDTFFPVAKGGTFCIPGPFGAGKTVLQQVTSRNADVDIVIIAACGERAGEVVETLKEFPELIDPKTGKSLMDRTCIICNTSSMPVAAREASVYTAITIGEYYRQMGLDILLLADSTSRWAQAMREMSGRLEEIPGEEAFPAYLESVIASFYERAGIVVLNNGDIGSVTVGGSVSPAGGNFEEPVTQATLKVVGAFHGLTRERSDARKFPAISPLESWSKYKGVIDSKKTEYVRSFLVKGNEINQMMKVVGEEGISNEDFLIYLKSELLDSCYLQQNSFDSIDAAVNSERQNYMFDIVYNILKTNFEFSDKLQARDFINELRQNLLDMNLSSFKDSKFNKLEHTLSELVNFKKVI.

238-245 (GPFGAGKT) provides a ligand contact to ATP.

The protein belongs to the ATPase alpha/beta chains family.

The enzyme catalyses ATP + H2O + 4 H(+)(in) = ADP + phosphate + 5 H(+)(out). Produces ATP from ADP in the presence of a proton gradient across the membrane. The V-type alpha chain is a catalytic subunit. The sequence is that of V-type ATP synthase alpha chain from Borreliella afzelii (strain PKo) (Borrelia afzelii).